We begin with the raw amino-acid sequence, 160 residues long: NADH-quinone oxidoreductase subunit B (160 aa).

4 residues coordinate [4Fe-4S] cluster: Cys-37, Cys-38, Cys-102, and Cys-132.

It belongs to the complex I 20 kDa subunit family. As to quaternary structure, NDH-1 is composed of 14 different subunits. Subunits NuoB, C, D, E, F, and G constitute the peripheral sector of the complex. Requires [4Fe-4S] cluster as cofactor.

It is found in the cell inner membrane. It catalyses the reaction a quinone + NADH + 5 H(+)(in) = a quinol + NAD(+) + 4 H(+)(out). Its function is as follows. NDH-1 shuttles electrons from NADH, via FMN and iron-sulfur (Fe-S) centers, to quinones in the respiratory chain. Couples the redox reaction to proton translocation (for every two electrons transferred, four hydrogen ions are translocated across the cytoplasmic membrane), and thus conserves the redox energy in a proton gradient. This chain is NADH-quinone oxidoreductase subunit B, found in Neisseria gonorrhoeae (strain ATCC 700825 / FA 1090).